A 506-amino-acid chain; its full sequence is Catalase (506 aa).

Catalysis depends on residues H73 and N146. Heme is bound at residue Y356. Residues 504–506 (SKF) carry the Microbody targeting signal motif.

It belongs to the catalase family. As to quaternary structure, homotetramer. The cofactor is heme.

It is found in the peroxisome matrix. It carries out the reaction 2 H2O2 = O2 + 2 H2O. In terms of biological role, catalyzes the degradation of hydrogen peroxide (H(2)O(2)) generated by peroxisomal oxidases to water and oxygen, thereby protecting cells from the toxic effects of hydrogen peroxide. The chain is Catalase (Cat) from Drosophila melanogaster (Fruit fly).